Consider the following 92-residue polypeptide: Defensin-like protein 294 (92 aa).

A signal peptide spans 1–26 (MASRATSLFIFFFLISCTFMLLETNA). Disulfide bonds link Cys-63–Cys-82, Cys-69–Cys-87, and Cys-75–Cys-89.

Belongs to the DEFL family.

It localises to the secreted. The chain is Defensin-like protein 294 from Arabidopsis thaliana (Mouse-ear cress).